The primary structure comprises 197 residues: FMN-dependent NADH:quinone oxidoreductase (197 aa).

FMN is bound by residues Ser10, 16–18 (SQS), 93–96 (MYNF), and 137–140 (TRGG).

The protein belongs to the azoreductase type 1 family. In terms of assembly, homodimer. The cofactor is FMN.

It catalyses the reaction 2 a quinone + NADH + H(+) = 2 a 1,4-benzosemiquinone + NAD(+). The catalysed reaction is N,N-dimethyl-1,4-phenylenediamine + anthranilate + 2 NAD(+) = 2-(4-dimethylaminophenyl)diazenylbenzoate + 2 NADH + 2 H(+). In terms of biological role, quinone reductase that provides resistance to thiol-specific stress caused by electrophilic quinones. Also exhibits azoreductase activity. Catalyzes the reductive cleavage of the azo bond in aromatic azo compounds to the corresponding amines. The protein is FMN-dependent NADH:quinone oxidoreductase of Shewanella frigidimarina (strain NCIMB 400).